The chain runs to 255 residues: Imidazole glycerol phosphate synthase subunit HisF (255 aa).

Residues Asp11 and Asp130 contribute to the active site.

It belongs to the HisA/HisF family. Heterodimer of HisH and HisF.

The protein localises to the cytoplasm. It carries out the reaction 5-[(5-phospho-1-deoxy-D-ribulos-1-ylimino)methylamino]-1-(5-phospho-beta-D-ribosyl)imidazole-4-carboxamide + L-glutamine = D-erythro-1-(imidazol-4-yl)glycerol 3-phosphate + 5-amino-1-(5-phospho-beta-D-ribosyl)imidazole-4-carboxamide + L-glutamate + H(+). The protein operates within amino-acid biosynthesis; L-histidine biosynthesis; L-histidine from 5-phospho-alpha-D-ribose 1-diphosphate: step 5/9. Its function is as follows. IGPS catalyzes the conversion of PRFAR and glutamine to IGP, AICAR and glutamate. The HisF subunit catalyzes the cyclization activity that produces IGP and AICAR from PRFAR using the ammonia provided by the HisH subunit. The sequence is that of Imidazole glycerol phosphate synthase subunit HisF from Exiguobacterium sp. (strain ATCC BAA-1283 / AT1b).